The chain runs to 119 residues: Hydrogenase maturation factor HypA (119 aa).

H2 is a Ni(2+) binding site. Zn(2+) is bound by residues C73, C76, C90, and C93.

It belongs to the HypA/HybF family.

Its function is as follows. Involved in the maturation of [NiFe] hydrogenases. Required for nickel insertion into the metal center of the hydrogenase. This chain is Hydrogenase maturation factor HypA, found in Wolinella succinogenes (strain ATCC 29543 / DSM 1740 / CCUG 13145 / JCM 31913 / LMG 7466 / NCTC 11488 / FDC 602W) (Vibrio succinogenes).